A 631-amino-acid chain; its full sequence is Putative ATP-dependent DNA helicase Q1 (631 aa).

Residues 118–293 (INAVMSKEDA…KDMLGIQAAL (176 aa)) form the Helicase ATP-binding domain. 131-138 (LSTGGGKS) provides a ligand contact to ATP. The short motif at 237 to 240 (DEVH) is the DEVH box element. The Helicase C-terminal domain occupies 318-466 (CTEEIAKTIK…NLYNMVRYAA (149 aa)). The Zn(2+) site is built by Cys-471, Cys-489, Cys-493, and Cys-496. Residues 610-631 (ESKSRKRKASSSVEEEDVMVLD) are disordered. The span at 622 to 631 (VEEEDVMVLD) shows a compositional bias: acidic residues.

It belongs to the helicase family. RecQ subfamily. The cofactor is Zn(2+).

It localises to the nucleus. It catalyses the reaction Couples ATP hydrolysis with the unwinding of duplex DNA by translocating in the 3'-5' direction.. It carries out the reaction ATP + H2O = ADP + phosphate + H(+). In terms of biological role, DNA helicase that may play a role in the repair of DNA that is damaged by ultraviolet light or other mutagens. Exhibits a magnesium-dependent ATP-dependent DNA-helicase activity that unwinds single- and double-stranded DNA in a 3'-5' direction. This is Putative ATP-dependent DNA helicase Q1 from Caenorhabditis elegans.